The primary structure comprises 512 residues: Pentatricopeptide repeat-containing protein At1g64583, mitochondrial (512 aa).

A mitochondrion-targeting transit peptide spans 1–34 (MRRLIVTGIATSTAKGFRRVVNPNLLGGGAAARA). PPR repeat units lie at residues 70–104 (SIVD…GISH), 105–139 (DLYS…GYEP), 140–174 (SIVT…GYEP), 175–209 (NVVV…GLGA), 210–244 (DVVT…SINP), 245–279 (DVVT…SVDP), 280–314 (NNVT…GCFP), 315–349 (NVVT…GFNA), 350–384 (DIFT…RVTP), 385–415 (DIIT…MRES), 420–454 (GIVA…GVKP), and 455–489 (DART…GIIC).

This sequence belongs to the PPR family. P subfamily.

It is found in the mitochondrion. The chain is Pentatricopeptide repeat-containing protein At1g64583, mitochondrial from Arabidopsis thaliana (Mouse-ear cress).